The chain runs to 417 residues: Gamma-glutamyl phosphate reductase (417 aa).

This sequence belongs to the gamma-glutamyl phosphate reductase family.

The protein localises to the cytoplasm. It catalyses the reaction L-glutamate 5-semialdehyde + phosphate + NADP(+) = L-glutamyl 5-phosphate + NADPH + H(+). It participates in amino-acid biosynthesis; L-proline biosynthesis; L-glutamate 5-semialdehyde from L-glutamate: step 2/2. Catalyzes the NADPH-dependent reduction of L-glutamate 5-phosphate into L-glutamate 5-semialdehyde and phosphate. The product spontaneously undergoes cyclization to form 1-pyrroline-5-carboxylate. The protein is Gamma-glutamyl phosphate reductase of Klebsiella pneumoniae subsp. pneumoniae (strain ATCC 700721 / MGH 78578).